A 119-amino-acid chain; its full sequence is MEKGKGRKEEVVTREYTINLHRRLHSCTFKKKAPNAIKEIRKFALKAMGTKDVRVDVKLNKQIWSKGIRGPPRRIRVRVARKRNDDEDAKEEFFSLVTVAEIPAEGLSGLGTKVIEEEE.

This sequence belongs to the eukaryotic ribosomal protein eL31 family.

This is Large ribosomal subunit protein eL31z (RPL31A) from Arabidopsis thaliana (Mouse-ear cress).